The chain runs to 165 residues: Endoribonuclease YbeY (165 aa).

3 residues coordinate Zn(2+): H130, H134, and H140.

It belongs to the endoribonuclease YbeY family. The cofactor is Zn(2+).

The protein localises to the cytoplasm. In terms of biological role, single strand-specific metallo-endoribonuclease involved in late-stage 70S ribosome quality control and in maturation of the 3' terminus of the 16S rRNA. This chain is Endoribonuclease YbeY, found in Streptococcus gordonii (strain Challis / ATCC 35105 / BCRC 15272 / CH1 / DL1 / V288).